Reading from the N-terminus, the 272-residue chain is 3-methyl-2-oxobutanoate hydroxymethyltransferase (272 aa).

Residues D54 and D93 each contribute to the Mg(2+) site. 3-methyl-2-oxobutanoate contacts are provided by residues 54–55 (DS), D93, and K121. Residue E123 coordinates Mg(2+). Catalysis depends on E190, which acts as the Proton acceptor.

The protein belongs to the PanB family. As to quaternary structure, homodecamer; pentamer of dimers. Requires Mg(2+) as cofactor.

The protein resides in the cytoplasm. It carries out the reaction 3-methyl-2-oxobutanoate + (6R)-5,10-methylene-5,6,7,8-tetrahydrofolate + H2O = 2-dehydropantoate + (6S)-5,6,7,8-tetrahydrofolate. It participates in cofactor biosynthesis; (R)-pantothenate biosynthesis; (R)-pantoate from 3-methyl-2-oxobutanoate: step 1/2. Functionally, catalyzes the reversible reaction in which hydroxymethyl group from 5,10-methylenetetrahydrofolate is transferred onto alpha-ketoisovalerate to form ketopantoate. The sequence is that of 3-methyl-2-oxobutanoate hydroxymethyltransferase from Janthinobacterium sp. (strain Marseille) (Minibacterium massiliensis).